A 408-amino-acid chain; its full sequence is Ribonuclease T2-like (408 aa).

Residues 1–25 form the signal peptide; it reads MLQSIPGPQHILKALTGSLGLSTIF. 4 disulfide bridges follow: C38–C56, C45–C92, C55–C158, and C100–C150. Residue H85 is part of the active site. A glycan (N-linked (GlcNAc...) asparagine) is linked at N108. Active-site residues include E143 and H147. An N-linked (GlcNAc...) asparagine glycan is attached at N173. C222 and C257 are disulfide-bonded. The interval 268–292 is disordered; it reads KHREPSRTTDTPSQPTTTGTPFKGR. The segment covering 275-288 has biased composition (low complexity); sequence TTDTPSQPTTTGTP. A glycan (N-linked (GlcNAc...) asparagine) is linked at N372.

This sequence belongs to the RNase T2 family.

The protein localises to the vacuole lumen. It localises to the cytoplasm. The enzyme catalyses a ribonucleotidyl-ribonucleotide-RNA + H2O = a 3'-end 3'-phospho-ribonucleotide-RNA + a 5'-end dephospho-ribonucleoside-RNA + H(+). Its function is as follows. Rnase which modulates cell survival under stress conditions. Released from the vacuole to the cytoplasm during stress to promote tRNA and rRNA cleavage and to activate separately a downstream pathway that promotes cell death. Involved in cell size, vacuolar morphology and growth at high temperatures and high salt concentration. The polypeptide is Ribonuclease T2-like (rny1) (Aspergillus fumigatus (strain ATCC MYA-4609 / CBS 101355 / FGSC A1100 / Af293) (Neosartorya fumigata)).